Reading from the N-terminus, the 754-residue chain is Circadian input-output histidine kinase CikA (754 aa).

Residues 1–183 (MLAPSSNCSL…QVSAQIRLSL (183 aa)) form an N-terminal domain, not required to complement the deletion strain region. The segment at 184 to 338 (DLSEILTTTI…RDILQHLAEH (155 aa)) is GAF domain, required to complement the deletion strain. In terms of domain architecture, Histidine kinase spans 390–611 (TMSHELRTPL…TFTVWIPEQT (222 aa)). His-393 is subject to Phosphohistidine; by autocatalysis. Positions 606 to 754 (WIPEQTLIEP…NLSEGDRPSS (149 aa)) are psR domain, required to complement the deletion strain and for cell pole localization, attenuates autophosphorylation activity. Binds KaiB(fs). Positions 629–742 (HILLLEEEDE…LLLTTLQGLC (114 aa)) constitute a Response regulatory domain.

In the N-terminal section; belongs to the phytochrome family. Homodimer. Part of the circadian clock (KaiA, KaiB, KaiC, CikA, RpaA, SasA), the composition of which varies during the circadian cycle. Interacts with LdpA. KaiA and CikA compete for binding to KaiB(fs).

It is found in the cytoplasm. It localises to the membrane. It carries out the reaction ATP + protein L-histidine = ADP + protein N-phospho-L-histidine.. Functionally, functions in an input pathway to the Kai circadian clock. Senses oxidized quinones via its C-terminal pseudo-receiver domain, providing a link between cell metabolism and the clock. Affects the ratio of phosphorylated to unphosphorylated KaiC, binds quinones via its pseudo-receptor domain. Quinone-binding destabilizes the protein rapidly. Autophosphorylates, does not transfer the phosphate to its pseudo-receiver (PsR) domain. May play a role in cell division, as suggested by its polar location and increased cell length in a deletion strain. Its function is as follows. Member of the two-component regulatory system CikA/RpaA output pathway from the circadian clock, negatively regulating kaiBC expression independently of labA and of sasA. One of three clock output pathways. Dephosphorylates phospho-RpaA, enhanced by KaiB and KaiC, has only modest kinase activity on RpaA. A very robust clock is reconstituted with KaiA, KaiB, KaiC, SasA, CikA and RpaA; output is measured by transcription from an appropriate reporter. The polypeptide is Circadian input-output histidine kinase CikA (Synechococcus elongatus (strain ATCC 33912 / PCC 7942 / FACHB-805) (Anacystis nidulans R2)).